The chain runs to 261 residues: MNDTLVIAGKHYRSRLLVGTGKYKDFAETRAAIDASGAEIVTVAIRRTNIGQNADEPNLLDALPPDQFTILPNTAGCYTADDAVRTLRLARELLDGHALVKLEVLGDPKSLFPNMPETLKAAETLVKDGFEVMVYCADDPIQAKMLEEIGCVAVMPLASLIGSGMGILNPWNLRLIIDNAKVPVLVDAGVGTASDAAIAMELGCDGVLMNTAIAAAGQPVLMASAMKKAVEAGREAFLAGRMPRKFYSADPSSPTAGLIGS.

Residue K101 is the Schiff-base intermediate with DXP of the active site. 1-deoxy-D-xylulose 5-phosphate-binding positions include G162, 188–189, and 210–211; these read AG and NT.

The protein belongs to the ThiG family. As to quaternary structure, homotetramer. Forms heterodimers with either ThiH or ThiS.

The protein localises to the cytoplasm. The catalysed reaction is [ThiS sulfur-carrier protein]-C-terminal-Gly-aminoethanethioate + 2-iminoacetate + 1-deoxy-D-xylulose 5-phosphate = [ThiS sulfur-carrier protein]-C-terminal Gly-Gly + 2-[(2R,5Z)-2-carboxy-4-methylthiazol-5(2H)-ylidene]ethyl phosphate + 2 H2O + H(+). It participates in cofactor biosynthesis; thiamine diphosphate biosynthesis. In terms of biological role, catalyzes the rearrangement of 1-deoxy-D-xylulose 5-phosphate (DXP) to produce the thiazole phosphate moiety of thiamine. Sulfur is provided by the thiocarboxylate moiety of the carrier protein ThiS. In vitro, sulfur can be provided by H(2)S. The sequence is that of Thiazole synthase from Azoarcus sp. (strain BH72).